We begin with the raw amino-acid sequence, 211 residues long: Uracil phosphoribosyltransferase (211 aa).

Residues arginine 79, arginine 104, and 131–139 (DPMLATGGS) contribute to the 5-phospho-alpha-D-ribose 1-diphosphate site. Residues isoleucine 196 and 201–203 (GDA) each bind uracil. Aspartate 202 serves as a coordination point for 5-phospho-alpha-D-ribose 1-diphosphate.

This sequence belongs to the UPRTase family. Requires Mg(2+) as cofactor.

The enzyme catalyses UMP + diphosphate = 5-phospho-alpha-D-ribose 1-diphosphate + uracil. It functions in the pathway pyrimidine metabolism; UMP biosynthesis via salvage pathway; UMP from uracil: step 1/1. Its activity is regulated as follows. Allosterically activated by GTP. Catalyzes the conversion of uracil and 5-phospho-alpha-D-ribose 1-diphosphate (PRPP) to UMP and diphosphate. The chain is Uracil phosphoribosyltransferase from Lactococcus lactis subsp. cremoris (strain MG1363).